Reading from the N-terminus, the 92-residue chain is DNA-directed RNA polymerase subunit omega (92 aa).

It belongs to the RNA polymerase subunit omega family. In terms of assembly, the RNAP catalytic core consists of 2 alpha, 1 beta, 1 beta' and 1 omega subunit. When a sigma factor is associated with the core the holoenzyme is formed, which can initiate transcription.

The catalysed reaction is RNA(n) + a ribonucleoside 5'-triphosphate = RNA(n+1) + diphosphate. Promotes RNA polymerase assembly. Latches the N- and C-terminal regions of the beta' subunit thereby facilitating its interaction with the beta and alpha subunits. This Acinetobacter baumannii (strain AB307-0294) protein is DNA-directed RNA polymerase subunit omega.